The chain runs to 390 residues: Pyruvate dehydrogenase E1 component subunit alpha, somatic form, mitochondrial (390 aa).

A mitochondrion-targeting transit peptide spans methionine 1 to asparagine 29. Residue lysine 63 is modified to N6-acetyllysine; alternate. Lysine 63 bears the N6-succinyllysine; alternate mark. Pyruvate contacts are provided by histidine 92, tyrosine 118, arginine 119, alanine 157, glycine 165, valine 167, aspartate 196, glycine 197, alanine 198, asparagine 225, and tyrosine 227. Thiamine diphosphate is bound by residues tyrosine 118 and arginine 119. Thiamine diphosphate is bound by residues glycine 165, valine 167, aspartate 196, glycine 197, alanine 198, and asparagine 225. Mg(2+) is bound at residue aspartate 196. Positions 225 and 227 each coordinate Mg(2+). Serine 232 is modified (phosphoserine; by PDK1). An N6-acetyllysine; alternate modification is found at lysine 244. An N6-succinyllysine; alternate modification is found at lysine 244. Lysine 277 is modified (N6-succinyllysine). Histidine 292 contributes to the thiamine diphosphate binding site. The residue at position 293 (serine 293) is a Phosphoserine; by PDK1, PDK2, PDK3 and PDK4. A Phosphoserine modification is found at serine 295. Residue serine 300 is modified to Phosphoserine; by PDK1, PDK2, PDK3 and PDK4. Residue tyrosine 301 is modified to Phosphotyrosine. Lysine 313 is modified (N6-acetyllysine; alternate). Lysine 313 is modified (N6-succinyllysine; alternate). Residues lysine 321 and lysine 336 each carry the N6-acetyllysine modification. Lysine 385 bears the N6-succinyllysine mark.

Heterotetramer of two PDHA1 and two PDHB subunits. The heterotetramer interacts with DLAT, and is part of the multimeric pyruvate dehydrogenase complex that contains multiple copies of pyruvate dehydrogenase (E1), dihydrolipoamide acetyltransferase (DLAT, E2) and lipoamide dehydrogenase (DLD, E3). These subunits are bound to an inner core composed of about 48 DLAT and 12 PDHX molecules. Requires thiamine diphosphate as cofactor. The cofactor is Mg(2+). In terms of processing, phosphorylation at Ser-232, Ser-293 and Ser-300 by PDK family kinases inactivates the enzyme; for this phosphorylation at a single site is sufficient. Phosphorylation at Ser-293 interferes with access to active site, and thereby inactivates the enzyme. Dephosphorylation at all three sites, i.e. at Ser-232, Ser-293 and Ser-300, is required for reactivation. Acetylation alters the phosphorylation pattern. Deacetylated by SIRT3.

Its subcellular location is the mitochondrion matrix. The enzyme catalyses N(6)-[(R)-lipoyl]-L-lysyl-[protein] + pyruvate + H(+) = N(6)-[(R)-S(8)-acetyldihydrolipoyl]-L-lysyl-[protein] + CO2. Pyruvate dehydrogenase activity is inhibited by phosphorylation of PDHA1; it is reactivated by dephosphorylation. The pyruvate dehydrogenase complex catalyzes the overall conversion of pyruvate to acetyl-CoA and CO(2), and thereby links the glycolytic pathway to the tricarboxylic cycle. The sequence is that of Pyruvate dehydrogenase E1 component subunit alpha, somatic form, mitochondrial (PDHA1) from Macaca fascicularis (Crab-eating macaque).